A 632-amino-acid polypeptide reads, in one-letter code: Probable potassium transport system protein Kup (632 aa).

12 helical membrane passes run L17–L37, L60–L80, T106–I126, L146–S166, F175–I195, A210–L230, W254–L274, A292–I312, I344–F364, L370–F390, L401–A421, and I426–T446.

The protein belongs to the HAK/KUP transporter (TC 2.A.72) family.

The protein resides in the cell inner membrane. It carries out the reaction K(+)(in) + H(+)(in) = K(+)(out) + H(+)(out). Transport of potassium into the cell. Likely operates as a K(+):H(+) symporter. This Rhizobium rhizogenes (Agrobacterium rhizogenes) protein is Probable potassium transport system protein Kup.